We begin with the raw amino-acid sequence, 292 residues long: Succinate dehydrogenase assembly factor 2, mitochondrial (292 aa).

Disordered regions lie at residues 27–68 and 266–292; these read RSFG…NTTS and TGFH…VFDS. Residues 55–68 are compositionally biased toward polar residues; the sequence is TNRPPNQHVPNTTS.

Belongs to the SDHAF2 family. Interacts with the flavoprotein subunit within the SDH catalytic dimer.

It is found in the mitochondrion matrix. In terms of biological role, plays an essential role in the assembly of succinate dehydrogenase (SDH), an enzyme complex (also referred to as respiratory complex II) that is a component of both the tricarboxylic acid (TCA) cycle and the mitochondrial electron transport chain, and which couples the oxidation of succinate to fumarate with the reduction of ubiquinone (coenzyme Q) to ubiquinol. Required for flavinylation (covalent attachment of FAD) of the flavoprotein subunit of the SDH catalytic dimer. The polypeptide is Succinate dehydrogenase assembly factor 2, mitochondrial (Aspergillus flavus (strain ATCC 200026 / FGSC A1120 / IAM 13836 / NRRL 3357 / JCM 12722 / SRRC 167)).